The primary structure comprises 226 residues: Lipid phosphate phosphatase gamma (226 aa).

Met-1 is modified (N-acetylmethionine). Transmembrane regions (helical) follow at residues 24–44, 52–72, 102–122, 128–148, and 152–174; these read LGHFLAWISLVPVFISLGGFV, ELQGIFFGIGLVISQFINEFI, FMFFFATYFSLMGCKGIGFWF, WIMNLLHWSLAVVTMYSRVYL, and TVAQVFAGAALGGIVGASWFWVV.

This sequence belongs to the PA-phosphatase related phosphoesterase family. In terms of tissue distribution, expressed in root tips, root branch points, vascular tissue of cotyledons and leaves, pistil, anthers and filaments.

The protein localises to the plastid. It localises to the chloroplast inner membrane. Its activity is regulated as follows. Inhibited by Mg(2+). Functionally, exhibits phosphatidate phosphatase (PAP) activity in vitro. May play a primary role as PAP in plastids. The protein is Lipid phosphate phosphatase gamma (LPPG) of Arabidopsis thaliana (Mouse-ear cress).